Consider the following 278-residue polypeptide: Large ribosomal subunit protein uL2 (278 aa).

2 disordered regions span residues 1-59 and 222-278; these read MAIR…GGHK and RGAA…NKKR. The segment covering 16-27 has biased composition (polar residues); that stretch reads SSVSEFSEITRS. 2 stretches are compositionally biased toward basic residues: residues 45–59 and 269–278; these read VHGHITTRHKGGGHK and VRRRRPNKKR.

It belongs to the universal ribosomal protein uL2 family. As to quaternary structure, part of the 50S ribosomal subunit. Forms a bridge to the 30S subunit in the 70S ribosome.

Functionally, one of the primary rRNA binding proteins. Required for association of the 30S and 50S subunits to form the 70S ribosome, for tRNA binding and peptide bond formation. It has been suggested to have peptidyltransferase activity; this is somewhat controversial. Makes several contacts with the 16S rRNA in the 70S ribosome. This is Large ribosomal subunit protein uL2 from Corynebacterium urealyticum (strain ATCC 43042 / DSM 7109).